The chain runs to 1057 residues: Adenylate-forming reductase stbB (1057 aa).

An adenylation (A) domain region spans residues 21–378; that stretch reads STKRQPGAVC…FRLRTDMNFE (358 aa). AMP contacts are provided by residues His251, 344 to 345, Thr349, and 423 to 426; these read NF and AVGR. The Carrier domain occupies 564–651; it reads ETLEEDIKAL…QMAAAIKNPS (88 aa). An O-(pantetheine 4'-phosphoryl)serine modification is found at Ser600. Residues 693–1025 are reductase (R) domain; that stretch reads IVVVTGSSGS…SGAVILGTDV (333 aa). NADP(+) is bound by residues 700–703, 783–785, Tyr858, and Lys862; these read SGSL and AAW.

It belongs to the adenylate-forming reductase family.

It carries out the reaction ilicicolinate B + AH2 + ATP = ilicicolin B + A + AMP + diphosphate. The protein operates within secondary metabolite biosynthesis; terpenoid biosynthesis. Functionally, nonribosomal peptide synthase-like protein; part of the cluster that mediates the biosynthesis of LL-Z1272-beta, also known as ilicicolin B, a prenylated aryl-aldehyde produced by several fungi and that serves as a key pathway intermediate for many fungal meroterpenoids. The first step in the pathway is performed by the non-reducing polyketide synthase stbA that produces orsellinic acid by condensing acetyl-CoA with 3 malonyl-CoA units. The prenyltransferase stbC then prenylates orsenilic acid into grifolic acid. Finally, grifolic acid is reduced to ilicicolin B by the NRPS-like protein stbB. This is Adenylate-forming reductase stbB from Stachybotrys bisbyi (Hyalostachybotrys bisbyi).